We begin with the raw amino-acid sequence, 738 residues long: Ethylene receptor (738 aa).

A run of 3 helical transmembrane segments spans residues 23-43 (ISDF…IYFV), 54-74 (VLVQ…INLW), and 92-112 (VLTA…IPDL). Positions 65 and 69 each coordinate Cu cation. The region spanning 158–307 (DRHTILKTTL…VVADQVAVAL (150 aa)) is the GAF domain. Residues 350–589 (VMNHEMRTPM…IFIVKLGFAE (240 aa)) form the Histidine kinase domain. Residue histidine 353 is modified to Phosphohistidine; by autocatalysis. One can recognise a Response regulatory domain in the interval 612-729 (PGLKVLVMDD…KMRSVLSELL (118 aa)). 4-aspartylphosphate is present on aspartate 660.

It belongs to the ethylene receptor family. Homodimer; disulfide-linked. The cofactor is Cu cation. Activation probably requires a transfer of a phosphate group between a His in the transmitter domain and an Asp of the receiver domain.

It is found in the endoplasmic reticulum membrane. It carries out the reaction ATP + protein L-histidine = ADP + protein N-phospho-L-histidine.. May act early in the ethylene signal transduction pathway, possibly as an ethylene receptor, or as a regulator of the pathway. The protein is Ethylene receptor (ETR1) of Prunus persica (Peach).